The sequence spans 485 residues: Cobyric acid synthase (485 aa).

The GATase cobBQ-type domain maps to 250-436 (RRIVACPILP…IHGLLASPAL (187 aa)). The active-site Nucleophile is the Cys332. The active site involves His428.

Belongs to the CobB/CobQ family. CobQ subfamily.

Its pathway is cofactor biosynthesis; adenosylcobalamin biosynthesis. In terms of biological role, catalyzes amidations at positions B, D, E, and G on adenosylcobyrinic A,C-diamide. NH(2) groups are provided by glutamine, and one molecule of ATP is hydrogenolyzed for each amidation. The polypeptide is Cobyric acid synthase (Sphingopyxis alaskensis (strain DSM 13593 / LMG 18877 / RB2256) (Sphingomonas alaskensis)).